Reading from the N-terminus, the 340-residue chain is Glutaminyl-peptide cyclotransferase (340 aa).

Residues 1 to 23 (MAIGSVVFAAAGLLLLLLPPSHQ) form the signal peptide. An N-linked (GlcNAc...) asparagine glycan is attached at Asn42. 2 residues coordinate alpha-D-mannopyranose: Arg85 and Glu91. Cys113 and Cys136 are joined by a disulfide. Asp131 serves as a coordination point for Zn(2+). Alpha-D-mannopyranose is bound by residues Gln151 and Arg155. Residue Asn156 is glycosylated (N-linked (GlcNAc...) asparagine). Glu170 serves as the catalytic Proton acceptor. Residue Glu171 coordinates Zn(2+). The Proton acceptor role is filled by Asp218. His297 serves as a coordination point for Zn(2+). Residue Leu306 participates in alpha-D-mannopyranose binding.

It belongs to the glutaminyl-peptide cyclotransferase family.

The protein localises to the secreted. The enzyme catalyses N-terminal L-glutaminyl-[peptide] = N-terminal 5-oxo-L-prolyl-[peptide] + NH4(+). Inhibited by imidazoles (imidazole, benzimidazole, 1-benzylimidazole, 1-methylimidazole, P150/03, N-omega-acetylhistamine and 4-methylimidazole) and cysteamines (cysteamine, N-dimethylcysteamine and N-diethylcysteamine). Partially inhibited by PDB50 1(3,4-dimethoxyphenyl)-3-(3-imidazol-1-ylpropyl)thiourea. Acts as a glutaminyl-peptide cyclotransferase. Responsible for the biosynthesis of pyroglutamyl peptides. Might be more efficient in the conversion of tri and tetrapeptides in vitro. Might have a relative preference for substrates containing hydrophobic amino acids in vitro. This chain is Glutaminyl-peptide cyclotransferase, found in Drosophila melanogaster (Fruit fly).